We begin with the raw amino-acid sequence, 101 residues long: Apolipoprotein C-II (101 aa).

The first 22 residues, 1 to 22 (MGTRCLLVLLLVLLVLKCEVQG), serve as a signal peptide directing secretion. Positions 23–28 (DDMARQ) are cleaved as a propeptide — removed in mature form. The segment at 66 to 74 (AMDEKIRDM) is lipid binding. The tract at residues 78-101 (STAAVRIYTGILTDQILSMLTGDP) is lipoprotein lipase cofactor.

It belongs to the apolipoprotein C2 family. Post-translationally, proapolipoprotein C-II is synthesized as a sialic acid containing glycoprotein which is subsequently desialylated prior to its proteolytic processing. In terms of processing, proapolipoprotein C-II, the major form found in plasma undergoes proteolytic cleavage of its N-terminal hexapeptide to generate the mature form apolipoprotein C-II, which occurs as the minor form in plasma.

It localises to the secreted. Its function is as follows. Component of chylomicrons, very low-density lipoproteins (VLDL), low-density lipoproteins (LDL), and high-density lipoproteins (HDL) in plasma. Plays an important role in lipoprotein metabolism as an activator of lipoprotein lipase, the enzyme which hydrolyzes the triacylglycerols on chylomicrons and VLDL. In Panthera tigris altaica (Siberian tiger), this protein is Apolipoprotein C-II (APOC2).